The chain runs to 222 residues: UPF0502 protein XCC4136 (222 aa).

Belongs to the UPF0502 family.

The protein is UPF0502 protein XCC4136 of Xanthomonas campestris pv. campestris (strain ATCC 33913 / DSM 3586 / NCPPB 528 / LMG 568 / P 25).